The sequence spans 162 residues: Large ribosomal subunit protein uL10 (162 aa).

It belongs to the universal ribosomal protein uL10 family. As to quaternary structure, part of the ribosomal stalk of the 50S ribosomal subunit. The N-terminus interacts with L11 and the large rRNA to form the base of the stalk. The C-terminus forms an elongated spine to which L12 dimers bind in a sequential fashion forming a multimeric L10(L12)X complex.

Functionally, forms part of the ribosomal stalk, playing a central role in the interaction of the ribosome with GTP-bound translation factors. The sequence is that of Large ribosomal subunit protein uL10 from Borreliella afzelii (strain PKo) (Borrelia afzelii).